We begin with the raw amino-acid sequence, 111 residues long: UPF0145 protein RBAM_010660 (111 aa).

Belongs to the UPF0145 family.

This chain is UPF0145 protein RBAM_010660, found in Bacillus velezensis (strain DSM 23117 / BGSC 10A6 / LMG 26770 / FZB42) (Bacillus amyloliquefaciens subsp. plantarum).